A 268-amino-acid polypeptide reads, in one-letter code: MKKQFLVRKNSSNSRYLRRDCVICLQKDGLRAQLSPCGHDQFDYSCICRWMDQSLTCPICKRHVDCVFYGFHGSSLYKKWYTQSLGSNQYSISRQLLRQPSFSSSENTDRLADLLRVRRFIYQKAWKSYENPSLSSHRQYQIPTPIQLASSASLLKKVESFIAKELLLFEYLDGHQINFIQIFLMGLLRVQNIQHPQTIDELAEFIGHEESSILLHELQRYLQFRPLSISSYLYSKRYLYGPEGLTMVQLLSQIENIQHESGPETENS.

The segment at 21–61 adopts an RING-type; degenerate zinc-finger fold; sequence CVICLQKDGLRAQLSPCGHDQFDYSCICRWMDQSLTCPICK.

It is found in the mitochondrion. Its subcellular location is the nucleus. This is an uncharacterized protein from Schizosaccharomyces pombe (strain 972 / ATCC 24843) (Fission yeast).